The sequence spans 29 residues: Bacteriocin (29 aa).

Its subcellular location is the secreted. Has antibacterial activity against strains of L.monocytogenes, L.lactis, B.subtilis, S.typhi, S.aureus, C.perfringens, E.aerogenes and M.luteus but not against E.coli, S.sonnei, S.pneumoniae, S.faecalis, P.aeruginosa, K.pneumoniae or P.vulgaris. The protein is Bacteriocin of Lactococcus lactis subsp. lactis (Streptococcus lactis).